The primary structure comprises 487 residues: Cobyric acid synthase (487 aa).

Residues 251-439 (KLKVVAPAYP…CHGVLDHPEA (189 aa)) enclose the GATase cobBQ-type domain. Cys-332 functions as the Nucleophile in the catalytic mechanism. The active site involves His-431.

The protein belongs to the CobB/CobQ family. CobQ subfamily.

Its pathway is cofactor biosynthesis; adenosylcobalamin biosynthesis. Its function is as follows. Catalyzes amidations at positions B, D, E, and G on adenosylcobyrinic A,C-diamide. NH(2) groups are provided by glutamine, and one molecule of ATP is hydrogenolyzed for each amidation. This is Cobyric acid synthase from Dechloromonas aromatica (strain RCB).